The primary structure comprises 853 residues: DNA mismatch repair protein MutS (853 aa).

An ATP-binding site is contributed by G614 to S621.

The protein belongs to the DNA mismatch repair MutS family.

This protein is involved in the repair of mismatches in DNA. It is possible that it carries out the mismatch recognition step. This protein has a weak ATPase activity. This Escherichia coli O6:H1 (strain CFT073 / ATCC 700928 / UPEC) protein is DNA mismatch repair protein MutS.